The chain runs to 118 residues: Large ribosomal subunit protein bL20 (118 aa).

This sequence belongs to the bacterial ribosomal protein bL20 family.

Its function is as follows. Binds directly to 23S ribosomal RNA and is necessary for the in vitro assembly process of the 50S ribosomal subunit. It is not involved in the protein synthesizing functions of that subunit. This is Large ribosomal subunit protein bL20 from Francisella philomiragia subsp. philomiragia (strain ATCC 25017 / CCUG 19701 / FSC 153 / O#319-036).